A 604-amino-acid chain; its full sequence is DNA polymerase alpha subunit B (604 aa).

The segment at Glu109–Glu171 is disordered. The span at Asn113–Ala141 shows a compositional bias: polar residues. 2 positions are modified to phosphothreonine: Thr129 and Thr132. A phosphoserine mark is found at Ser143, Ser149, Ser154, and Ser156. A compositionally biased stretch (low complexity) spans Ser143 to Pro160.

This sequence belongs to the DNA polymerase alpha subunit B family. Component of the alpha DNA polymerase complex (also known as the alpha DNA polymerase-primase complex) consisting of four subunits: the catalytic subunit POLA1, the regulatory subunit POLA2, and the primase complex subunits PRIM1 and PRIM2 respectively. Within the complex, POLA1 directly interacts with PRIM2. In terms of processing, phosphorylated in a cell cycle-dependent manner, in G2/M phase.

It is found in the nucleus. Functionally, accessory subunit of the DNA polymerase alpha complex (also known as the alpha DNA polymerase-primase complex) which plays an essential role in the initiation of DNA synthesis. During the S phase of the cell cycle, the DNA polymerase alpha complex (composed of a catalytic subunit POLA1, an accessory subunit POLA2 and two primase subunits, the catalytic subunit PRIM1 and the regulatory subunit PRIM2) is recruited to DNA at the replicative forks via direct interactions with MCM10 and WDHD1. The primase subunit of the polymerase alpha complex initiates DNA synthesis by oligomerising short RNA primers on both leading and lagging strands. These primers are initially extended by the polymerase alpha catalytic subunit and subsequently transferred to polymerase delta and polymerase epsilon for processive synthesis on the lagging and leading strand, respectively. The polypeptide is DNA polymerase alpha subunit B (POLA2) (Bos taurus (Bovine)).